The primary structure comprises 333 residues: UPF0324 membrane protein WS2204 (333 aa).

A run of 9 helical transmembrane segments spans residues 4–26 (SIRPFVLGIALCTLIGIVAFGLA), 31–53 (FLSLHLSPLILSVLVGMALAPWY), 59–81 (IGIIGVLWCGKRLLRLGIVLFGF), 88–110 (LLGVGVEGFLIALLVVAGIFTLG), 125–147 (SMLIACGSAVCGAAAILALESLS), 154–176 (TAIAVGVVVLFGLLSMFLYPLVY), 218–240 (VIVKMIRVILLVPLLLLLSFTIL), 253–275 (PWFALLFLGAILLGSLFFFPSWL), and 310–332 (ALALGAILWGVLLFGGLGLVKLL).

The protein belongs to the UPF0324 family.

It is found in the cell membrane. In Wolinella succinogenes (strain ATCC 29543 / DSM 1740 / CCUG 13145 / JCM 31913 / LMG 7466 / NCTC 11488 / FDC 602W) (Vibrio succinogenes), this protein is UPF0324 membrane protein WS2204.